Consider the following 143-residue polypeptide: Snake venom vascular endothelial growth factor toxin (143 aa).

An N-terminal signal peptide occupies residues 1–24 (MAAYLLAVAILFCIQGWPSATVQG). Glutamine 25 carries the pyrrolidone carboxylic acid modification. 3 disulfides stabilise this stretch: cysteine 38–cysteine 80, cysteine 69–cysteine 115, and cysteine 73–cysteine 117. The interval 115-143 (CECRPRSPGDVNNGRNPEEGEPRARFPFV) is disordered. Positions 130–143 (NPEEGEPRARFPFV) are enriched in basic and acidic residues.

Belongs to the PDGF/VEGF growth factor family. Snake venom VEGF subfamily. In terms of assembly, homodimer; disulfide-linked. Interacts with VEGF receptor-2 (KDR). In terms of processing, the N-terminus is blocked for N-terminal sequencing, suggesting a Pyrrolidone carboxylic acid at Gln-25. Expressed by the venom gland.

The protein resides in the secreted. Snake venom VEGFs that may contribute to venom dispersion and prey subjugation by inducing vascular permeability and hypotension. This protein induces an increase in capillary permeability when intradermally injected into mice. Also provokes a drastic hypotensive effect after intravenous injection. The hypotension is mediated by nitric oxide (NO), which is produced by VEGF-activated endothelium NO synthase. Also induces angiogenesis in vitro. Unlike other crotalid VEGFs, this protein interacts with VEGF receptor-2 (KDR) with a high affinity (Kd=413 pM), whereas no interaction is detected with VEGF receptor-1 (FLT1). This is Snake venom vascular endothelial growth factor toxin from Protobothrops jerdonii (Jerdon's pitviper).